Here is a 203-residue protein sequence, read N- to C-terminus: Imidazoleglycerol-phosphate dehydratase (203 aa).

This sequence belongs to the imidazoleglycerol-phosphate dehydratase family.

The protein localises to the cytoplasm. It carries out the reaction D-erythro-1-(imidazol-4-yl)glycerol 3-phosphate = 3-(imidazol-4-yl)-2-oxopropyl phosphate + H2O. The protein operates within amino-acid biosynthesis; L-histidine biosynthesis; L-histidine from 5-phospho-alpha-D-ribose 1-diphosphate: step 6/9. The polypeptide is Imidazoleglycerol-phosphate dehydratase (Salinispora tropica (strain ATCC BAA-916 / DSM 44818 / JCM 13857 / NBRC 105044 / CNB-440)).